Reading from the N-terminus, the 106-residue chain is Large ribosomal subunit protein uL23 (106 aa).

This sequence belongs to the universal ribosomal protein uL23 family. Part of the 50S ribosomal subunit. Contacts protein L29, and trigger factor when it is bound to the ribosome.

In terms of biological role, one of the early assembly proteins it binds 23S rRNA. One of the proteins that surrounds the polypeptide exit tunnel on the outside of the ribosome. Forms the main docking site for trigger factor binding to the ribosome. The sequence is that of Large ribosomal subunit protein uL23 from Acinetobacter baumannii (strain SDF).